The primary structure comprises 545 residues: CTP synthase (545 aa).

An amidoligase domain region spans residues methionine 1 to isoleucine 266. Serine 14 contacts CTP. A UTP-binding site is contributed by serine 14. ATP is bound by residues serine 15–isoleucine 20 and aspartate 72. Mg(2+) is bound by residues aspartate 72 and glutamate 140. Residues aspartate 147–glutamate 149, lysine 187–glutamine 192, and lysine 223 contribute to the CTP site. UTP is bound by residues lysine 187 to glutamine 192 and lysine 223. Position 239–241 (lysine 239–valine 241) interacts with ATP. In terms of domain architecture, Glutamine amidotransferase type-1 spans threonine 291–arginine 542. An L-glutamine-binding site is contributed by glycine 352. Cysteine 379 functions as the Nucleophile; for glutamine hydrolysis in the catalytic mechanism. Residues leucine 380 to glutamine 383, glutamate 403, and arginine 470 each bind L-glutamine. Active-site residues include histidine 515 and glutamate 517.

The protein belongs to the CTP synthase family. As to quaternary structure, homotetramer.

It catalyses the reaction UTP + L-glutamine + ATP + H2O = CTP + L-glutamate + ADP + phosphate + 2 H(+). It carries out the reaction L-glutamine + H2O = L-glutamate + NH4(+). The catalysed reaction is UTP + NH4(+) + ATP = CTP + ADP + phosphate + 2 H(+). Its pathway is pyrimidine metabolism; CTP biosynthesis via de novo pathway; CTP from UDP: step 2/2. With respect to regulation, allosterically activated by GTP, when glutamine is the substrate; GTP has no effect on the reaction when ammonia is the substrate. The allosteric effector GTP functions by stabilizing the protein conformation that binds the tetrahedral intermediate(s) formed during glutamine hydrolysis. Inhibited by the product CTP, via allosteric rather than competitive inhibition. In terms of biological role, catalyzes the ATP-dependent amination of UTP to CTP with either L-glutamine or ammonia as the source of nitrogen. Regulates intracellular CTP levels through interactions with the four ribonucleotide triphosphates. This is CTP synthase from Shewanella woodyi (strain ATCC 51908 / MS32).